The chain runs to 233 residues: Ribosomal RNA large subunit methyltransferase E (233 aa).

S-adenosyl-L-methionine is bound by residues G80, W82, D108, D124, and D148. The active-site Proton acceptor is the K188.

Belongs to the class I-like SAM-binding methyltransferase superfamily. RNA methyltransferase RlmE family.

Its subcellular location is the cytoplasm. The enzyme catalyses uridine(2552) in 23S rRNA + S-adenosyl-L-methionine = 2'-O-methyluridine(2552) in 23S rRNA + S-adenosyl-L-homocysteine + H(+). In terms of biological role, specifically methylates the uridine in position 2552 of 23S rRNA at the 2'-O position of the ribose in the fully assembled 50S ribosomal subunit. In Ruegeria pomeroyi (strain ATCC 700808 / DSM 15171 / DSS-3) (Silicibacter pomeroyi), this protein is Ribosomal RNA large subunit methyltransferase E.